The sequence spans 847 residues: Lethal(3)malignant brain tumor-like protein 1 (847 aa).

2 stretches are compositionally biased toward basic and acidic residues: residues 65 to 82 (FPREPPRNTGAERPEKGV) and 144 to 155 (AVKEGHAKKDGD). Disordered regions lie at residues 65 to 87 (FPREPPRNTGAERPEKGVGSEPI), 142 to 163 (AEAVKEGHAKKDGDSDVAPTSR), and 237 to 296 (VKKR…SEEK). MBT repeat units follow at residues 300-400 (WSWA…LQPP), 408-507 (FSWT…LTPP), and 516-611 (FIWE…LQPP). Positions 473 to 480 (FDNWDDTY) are interaction with monomethylated and dimethylated peptides. The segment at 639–682 (SKYSFHHRKCPTPGCDGSGHVTGRFTAHYCLSGCPLAEKNQGKL) adopts a CCHHC-type zinc-finger fold. 4 residues coordinate Zn(2+): Cys648, Cys653, His666, and Cys672. The region spanning 778-842 (WTIDEVFSFV…YNAILMFKNA (65 aa)) is the SAM domain.

In terms of assembly, homodimer.

Its subcellular location is the nucleus. In terms of biological role, polycomb group (PcG) protein that specifically recognizes and binds mono- and dimethyllysine residues on target proteins, thereby acting as a 'reader' of a network of post-translational modifications. PcG proteins maintain the transcriptionally repressive state of genes: acts as a chromatin compaction factor by recognizing and binding mono- and dimethylated histone H1b/H1-4 at 'Lys-26' (H1bK26me1 and H1bK26me2) and histone H4 at 'Lys-20' (H4K20me1 and H4K20me2), leading to condense chromatin and repress transcription. This Gallus gallus (Chicken) protein is Lethal(3)malignant brain tumor-like protein 1 (L3MBTL1).